The chain runs to 463 residues: Sodium-coupled neutral amino acid transporter 7 (463 aa).

Position 28 is a phosphoserine (S28). 11 helical membrane passes run 56–76 (AVFIVVNACLGAGLLNFPAAF), 82–102 (VAAGIALQMGMLVFIISGLVI), 130–150 (LCEIAIAVYTFGTCIAFLIII), 179–199 (FTISLTAFLFILPLSIPKEIG), 206–226 (SLSVVGTWYVTAIVIIKYIWP), 240–260 (ASWMAVFNAMPTICFGFQCHV), 283–303 (AAMVIALAVYMGTGICGFLTF), 320–340 (VAVAVARAFIILSVLTSYPIL), 372–392 (VLQTLVWFLLTLLLALFIPDI), 396–416 (ISVIGGLAACFIFIFPGLCLI), and 429–449 (ASWWALVSYGVLLVTLGAFIF).

This sequence belongs to the amino acid/polyamine transporter 2 family. As to quaternary structure, interacts with the mTORC1 complex; this interaction mediates the recruitment of mTORC1 to the lysosome and its subsequent activation.

The protein resides in the lysosome membrane. It is found in the cell projection. It localises to the axon. It carries out the reaction L-asparagine(in) + Na(+)(in) = L-asparagine(out) + Na(+)(out). It catalyses the reaction L-glutamine(in) + Na(+)(in) = L-glutamine(out) + Na(+)(out). Functionally, symporter that selectively cotransports sodium ions and amino acids, such as L-glutamine and L-asparagine from the lysosome into the cytoplasm and may participates in mTORC1 activation. The transport activity requires an acidic lysosomal lumen. The chain is Sodium-coupled neutral amino acid transporter 7 from Rattus norvegicus (Rat).